A 484-amino-acid polypeptide reads, in one-letter code: uncharacterized protein (484 aa).

A compositionally biased stretch (low complexity) spans 1 to 14 (MIDSTSTATATSKT). Positions 1–32 (MIDSTSTATATSKTVELNTNGSKTDASSENGT) are disordered. Residues 15 to 32 (VELNTNGSKTDASSENGT) show a composition bias toward polar residues. Lys305 bears the N6-(pyridoxal phosphate)lysine mark.

This sequence belongs to the class-III pyridoxal-phosphate-dependent aminotransferase family. Pyridoxal 5'-phosphate is required as a cofactor.

This is an uncharacterized protein from Schizosaccharomyces pombe (strain 972 / ATCC 24843) (Fission yeast).